The primary structure comprises 680 residues: Transketolase 1 (680 aa).

His30 provides a ligand contact to substrate. Thiamine diphosphate contacts are provided by residues His69 and 116–118; that span reads GPL. Asp157 contributes to the Mg(2+) binding site. Residues Gly158 and Asn187 each coordinate thiamine diphosphate. Residues Asn187 and Ile189 each contribute to the Mg(2+) site. His263 is a binding site for substrate. His263 provides a ligand contact to thiamine diphosphate. A phosphoserine mark is found at Ser286 and Ser335. Positions 359 and 386 each coordinate substrate. The residue at position 402 (Ser402) is a Phosphoserine. Residues Glu418 and Phe445 each contribute to the thiamine diphosphate site. Glu418 functions as the Proton donor in the catalytic mechanism. His469 and Asp477 together coordinate substrate. Ser492 carries the phosphoserine modification. Arg528 provides a ligand contact to substrate. Residue Lys647 forms a Glycyl lysine isopeptide (Lys-Gly) (interchain with G-Cter in ubiquitin) linkage.

It belongs to the transketolase family. Homodimer. Mg(2+) is required as a cofactor. The cofactor is Ca(2+). It depends on Mn(2+) as a cofactor. Requires Co(2+) as cofactor. Thiamine diphosphate serves as cofactor.

It catalyses the reaction D-sedoheptulose 7-phosphate + D-glyceraldehyde 3-phosphate = aldehydo-D-ribose 5-phosphate + D-xylulose 5-phosphate. Catalyzes the transfer of a two-carbon ketol group from a ketose donor to an aldose acceptor, via a covalent intermediate with the cofactor thiamine pyrophosphate. In Saccharomyces cerevisiae (strain ATCC 204508 / S288c) (Baker's yeast), this protein is Transketolase 1 (TKL1).